Reading from the N-terminus, the 488-residue chain is E3 ubiquitin-protein ligase XIAP (488 aa).

3 BIR repeats span residues R40–N105, R176–L241, and R266–I329. Residues C298, C301, H318, and C325 each coordinate Zn(2+). The segment at C441–C476 adopts an RING-type zinc-finger fold.

It belongs to the IAP family. As to quaternary structure, monomer, and homodimer. Post-translationally, degraded in a 2-step mechanism; a caspase-independent first step and a caspase-dependent second step. Stabilized indirectly by MAPK, which acts to delay caspase activation, rather than directly phosphorylating xiap.

The protein localises to the cytoplasm. It localises to the nucleus. It carries out the reaction S-ubiquitinyl-[E2 ubiquitin-conjugating enzyme]-L-cysteine + [acceptor protein]-L-lysine = [E2 ubiquitin-conjugating enzyme]-L-cysteine + N(6)-ubiquitinyl-[acceptor protein]-L-lysine.. Functionally, multi-functional protein which regulates not only caspases and apoptosis, but also acts as an E3 ubiquitin-protein ligase mediating ubiquitination and subsequent proteasomal degradation of its target proteins. Acts as a direct caspase inhibitor. E3 ubiquitin-protein ligase that acts as an important regulator of innate immunity by mediating 'Lys-63'-linked polyubiquitination of ripk2 downstream of NOD1 and NOD2, thereby transforming ripk2 into a scaffolding protein for downstream effectors, ultimately leading to activation of the NF-kappa-B and MAP kinases signaling. A key apoptotic suppressor in eggs. Acts as a positive regulator of Wnt signaling. The sequence is that of E3 ubiquitin-protein ligase XIAP (xiap) from Xenopus laevis (African clawed frog).